A 515-amino-acid polypeptide reads, in one-letter code: Cytochrome P450 monooxygenase ptmJ (515 aa).

The next 4 membrane-spanning stretches (helical) occupy residues 6–26 (LGPF…LFVI), 50–70 (LGVV…LFCV), 82–102 (VFYL…EPVV), and 300–320 (VIIL…LFLH). Cys449 is a binding site for heme.

The protein belongs to the cytochrome P450 family. It depends on heme as a cofactor.

It localises to the membrane. Its pathway is secondary metabolite biosynthesis. Cytochrome P450 monooxygenase; part of the gene cluster that mediates the biosynthesis of the indole diterpenes penitrems. The geranylgeranyl diphosphate (GGPP) synthase ptmG catalyzes the first step in penitrem biosynthesis via conversion of farnesyl pyrophosphate and isopentyl pyrophosphate into geranylgeranyl pyrophosphate (GGPP). Condensation of indole-3-glycerol phosphate with GGPP by the prenyl transferase ptmC then forms 3-geranylgeranylindole (3-GGI). Epoxidation by the FAD-dependent monooxygenase ptmM leads to a epoxidized-GGI that is substrate of the terpene cyclase ptmB for cyclization to yield paspaline. Paspaline is subsequently converted to 13-desoxypaxilline by the cytochrome P450 monooxygenase ptmP, the latter being then converted to paxilline by the cytochrome P450 monooxygenase ptmQ. Paxilline is converted to beta-paxitriol via C-10 ketoreduction by the short-chain dehydrogenase ptmH which can be monoprenylated at the C-20 by the indole diterpene prenyltransferase ptmD. A two-step elimination (acetylation and elimination) process performed by the O-acetyltransferase ptmV and ptmI leads to the production of the prenylated form of penijanthine. The FAD-linked oxidoreductase ptmO then converts the prenylated form of penijanthine into PC-M5 which is in turn transformed into PC-M4 by the aromatic dimethylallyltransferase ptmE. Five sequential oxidative transformations performed by the cytochrome P450 monooxygenases ptmK, ptmU, ptmL, ptmN and ptmJ yield the various penitrem compounds. PtmK, ptmU and ptmM are involved in the formation of the key bicyclic ring of penitrem C via the formation of the intermediates secopenitrem D and penitrem D. PtmL catalyzes the epoxidation of penitrem D and C to yield penitrem B and F, respectively. PtmJ catalyzes the last benzylic hydroxylation to convert penitrem B to prenitrem E and penitrem F to penitrem A. The protein is Cytochrome P450 monooxygenase ptmJ of Penicillium ochrochloron.